The following is a 390-amino-acid chain: EF-hand calcium-binding domain-containing protein 4A (390 aa).

The span at 1–27 (MSPRSTLRSPLPSRTARSSASSDTPSP) shows a compositional bias: low complexity. Positions 1–37 (MSPRSTLRSPLPSRTARSSASSDTPSPGADRQDRMSK) are disordered. 2 EF-hand domains span residues 33–66 (DRMS…QELP) and 67–102 (LSPE…LVGS). Asp-80, Asp-82, Asn-84, Tyr-86, and Glu-91 together coordinate Ca(2+). Positions 173 to 357 (SHLQDALKEK…DDKDAHQAQK (185 aa)) form a coiled coil. The segment at 206–234 (DMESQLKEERERRQALDSMRQGDKKEQLL) is disordered.

This sequence belongs to the EFCAB4 family.

This chain is EF-hand calcium-binding domain-containing protein 4A (cracr2b), found in Danio rerio (Zebrafish).